Here is a 461-residue protein sequence, read N- to C-terminus: Ribosomal protein uS12 methylthiotransferase RimO (461 aa).

An MTTase N-terminal domain is found at 13-128 (PKVGFVSLGC…VMQHVHTHLP (116 aa)). Cys-22, Cys-58, Cys-87, Cys-159, Cys-163, and Cys-166 together coordinate [4Fe-4S] cluster. Positions 145–390 (LTPRHYAYLK…MEVAEEVSAK (246 aa)) constitute a Radical SAM core domain. In terms of domain architecture, TRAM spans 393–461 (AKKVGKTLKV…ADGHDLWGEV (69 aa)).

This sequence belongs to the methylthiotransferase family. RimO subfamily. Requires [4Fe-4S] cluster as cofactor.

It is found in the cytoplasm. The catalysed reaction is L-aspartate(89)-[ribosomal protein uS12]-hydrogen + (sulfur carrier)-SH + AH2 + 2 S-adenosyl-L-methionine = 3-methylsulfanyl-L-aspartate(89)-[ribosomal protein uS12]-hydrogen + (sulfur carrier)-H + 5'-deoxyadenosine + L-methionine + A + S-adenosyl-L-homocysteine + 2 H(+). In terms of biological role, catalyzes the methylthiolation of an aspartic acid residue of ribosomal protein uS12. This chain is Ribosomal protein uS12 methylthiotransferase RimO, found in Paraburkholderia phytofirmans (strain DSM 17436 / LMG 22146 / PsJN) (Burkholderia phytofirmans).